A 358-amino-acid polypeptide reads, in one-letter code: Cyanide hydratase (358 aa).

Positions 8-287 (YKAAAVNAEP…QGLLFVDIDL (280 aa)) constitute a CN hydrolase domain. The active-site Proton acceptor is Glu48. Residue Lys130 is part of the active site. Cys165 (nucleophile) is an active-site residue.

Belongs to the carbon-nitrogen hydrolase superfamily. Nitrilase family. As to quaternary structure, oligomer of dimers, forming left-handed helical fibers.

It carries out the reaction formamide = hydrogen cyanide + H2O. Its function is as follows. Catalyzes the hydration of cyanide to formamide. Degradation of cyanide may be important for plant pathogenic fungi in infection of cyanogenic plants. This is Cyanide hydratase from Penicillium rubens (strain ATCC 28089 / DSM 1075 / NRRL 1951 / Wisconsin 54-1255) (Penicillium chrysogenum).